The primary structure comprises 363 residues: Adenylate cyclase 2 (363 aa).

One can recognise a Guanylate cyclase domain in the interval 157–286 (VFLFIDLAGS…DTVNTTARLE (130 aa)). Mg(2+) contacts are provided by Asp162 and Asp206. Residues 341–363 (GDGATEPAGETVRSPAAEAFTSL) form a disordered region.

The protein belongs to the adenylyl cyclase class-3 family. Mg(2+) is required as a cofactor.

The catalysed reaction is ATP = 3',5'-cyclic AMP + diphosphate. Its function is as follows. Plays essential roles in regulation of cellular metabolism by catalyzing the synthesis of a second messenger, cAMP. In Rhizobium meliloti (strain 1021) (Ensifer meliloti), this protein is Adenylate cyclase 2 (cya2).